Reading from the N-terminus, the 190-residue chain is Ribosome hibernation promotion factor (190 aa).

The protein belongs to the HPF/YfiA ribosome-associated protein family. Long HPF subfamily. In terms of assembly, interacts with 100S ribosomes.

The protein localises to the cytoplasm. Required for dimerization of active 70S ribosomes into 100S ribosomes in stationary phase; 100S ribosomes are translationally inactive and sometimes present during exponential growth. The chain is Ribosome hibernation promotion factor from Staphylococcus aureus (strain COL).